We begin with the raw amino-acid sequence, 202 residues long: Lymphotoxin-alpha (202 aa).

Residues 1–33 form the signal peptide; the sequence is MTPLGRLHLLRVLSTPPVFLLGLLLALPLGAQG. The region spanning 60-202 is the THD domain; it reads PAAHLVGYPS…STVFFGAFAL (143 aa). The N-linked (GlcNAc...) asparagine glycan is linked to Asn93.

This sequence belongs to the tumor necrosis factor family. In terms of assembly, homotrimer, and heterotrimer of either two LTB and one LTA subunits or (less prevalent) two LTA and one LTB subunits. Interacts with TNFRSF14.

It is found in the secreted. The protein resides in the membrane. Functionally, cytokine that in its homotrimeric form binds to TNFRSF1A/TNFR1, TNFRSF1B/TNFBR and TNFRSF14/HVEM. In its heterotrimeric form with LTB binds to TNFRSF3/LTBR. Lymphotoxin is produced by lymphocytes and is cytotoxic for a wide range of tumor cells in vitro and in vivo. This is Lymphotoxin-alpha (Lta) from Rattus norvegicus (Rat).